A 271-amino-acid chain; its full sequence is Digeranylgeranylglyceryl phosphate synthase (271 aa).

A run of 8 helical transmembrane segments spans residues 11–31 (INCA…GARL), 33–53 (VGAV…NAIN), 88–108 (FAVG…IAAL), 125–145 (LIGN…GAAV), 149–169 (PAPA…REIL), 201–221 (VFAI…VVGW), 224–244 (LVLA…AVAG), and 251–271 (AQRV…ASLL).

This sequence belongs to the UbiA prenyltransferase family. DGGGP synthase subfamily. Requires Mg(2+) as cofactor.

Its subcellular location is the cell membrane. It catalyses the reaction sn-3-O-(geranylgeranyl)glycerol 1-phosphate + (2E,6E,10E)-geranylgeranyl diphosphate = 2,3-bis-O-(geranylgeranyl)-sn-glycerol 1-phosphate + diphosphate. Its pathway is membrane lipid metabolism; glycerophospholipid metabolism. In terms of biological role, prenyltransferase that catalyzes the transfer of the geranylgeranyl moiety of geranylgeranyl diphosphate (GGPP) to the C2 hydroxyl of (S)-3-O-geranylgeranylglyceryl phosphate (GGGP). This reaction is the second ether-bond-formation step in the biosynthesis of archaeal membrane lipids. In Methanopyrus kandleri (strain AV19 / DSM 6324 / JCM 9639 / NBRC 100938), this protein is Digeranylgeranylglyceryl phosphate synthase.